An 872-amino-acid polypeptide reads, in one-letter code: Alanine--tRNA ligase (872 aa).

The Zn(2+) site is built by H567, H571, C669, and H673.

Belongs to the class-II aminoacyl-tRNA synthetase family. Requires Zn(2+) as cofactor.

It localises to the cytoplasm. It catalyses the reaction tRNA(Ala) + L-alanine + ATP = L-alanyl-tRNA(Ala) + AMP + diphosphate. Functionally, catalyzes the attachment of alanine to tRNA(Ala) in a two-step reaction: alanine is first activated by ATP to form Ala-AMP and then transferred to the acceptor end of tRNA(Ala). Also edits incorrectly charged Ser-tRNA(Ala) and Gly-tRNA(Ala) via its editing domain. In Streptococcus pyogenes serotype M5 (strain Manfredo), this protein is Alanine--tRNA ligase.